A 251-amino-acid polypeptide reads, in one-letter code: MAVHLLIVDALNLIRRVHAVQGSPCVETCQHALDQLIMHSQPTHAVAVFDDENRSSGWRHQRLPDYKAGRPPMPEELHDEMPALRTAFEQRGVPCWSASGNEADDLAATLAVKVTQAGHQATIVSTDKGYCQLLSPTLRIRDYFQKRWLDAPFIDKEFGVQPQQLPDYWGLAGISSSKVPGVAGIGPKSATQLLVEFQSLEGIYENLDAVAEKWRKKLETHKEMAFLCRDIARLQTDLHIDGNLQQLRLVR.

Aspartate 104 serves as a coordination point for Mg(2+). The 5'-3' exonuclease domain occupies 160-249 (VQPQQLPDYW…IDGNLQQLRL (90 aa)). K(+) contacts are provided by leucine 171, alanine 172, proline 180, valine 182, and isoleucine 185. Positions 184 to 189 (GIGPKS) are interaction with DNA.

The protein belongs to the Xni family. Mg(2+) serves as cofactor. It depends on K(+) as a cofactor.

Its function is as follows. Has flap endonuclease activity. During DNA replication, flap endonucleases cleave the 5'-overhanging flap structure that is generated by displacement synthesis when DNA polymerase encounters the 5'-end of a downstream Okazaki fragment. The protein is Flap endonuclease Xni of Escherichia coli O17:K52:H18 (strain UMN026 / ExPEC).